A 379-amino-acid polypeptide reads, in one-letter code: Alcohol dehydrogenase class-3 (379 aa).

Residues Cys47, His69, Cys99, Cys102, Cys105, Cys113, and Cys176 each contribute to the Zn(2+) site.

This sequence belongs to the zinc-containing alcohol dehydrogenase family. Class-III subfamily. Homodimer. It depends on Zn(2+) as a cofactor.

The protein localises to the cytoplasm. It carries out the reaction a primary alcohol + NAD(+) = an aldehyde + NADH + H(+). The catalysed reaction is a secondary alcohol + NAD(+) = a ketone + NADH + H(+). It catalyses the reaction S-(hydroxymethyl)glutathione + NADP(+) = S-formylglutathione + NADPH + H(+). The enzyme catalyses S-(hydroxymethyl)glutathione + NAD(+) = S-formylglutathione + NADH + H(+). Class-III ADH is remarkably ineffective in oxidizing ethanol, but it readily catalyzes the oxidation of long-chain primary alcohols and the oxidation of S-(hydroxymethyl) glutathione. The polypeptide is Alcohol dehydrogenase class-3 (adh5) (Dictyostelium discoideum (Social amoeba)).